A 123-amino-acid polypeptide reads, in one-letter code: uncharacterized protein (123 aa).

An N-terminal signal peptide occupies residues Met-1–Ala-20. The GPI-anchor amidated glycine moiety is linked to residue Gly-96. The propeptide at Ser-97–His-123 is removed in mature form.

Its subcellular location is the cell membrane. This is an uncharacterized protein from Schizosaccharomyces pombe (strain 972 / ATCC 24843) (Fission yeast).